The chain runs to 874 residues: Alanine--tRNA ligase (874 aa).

Residues His562, His566, Cys664, and His668 each coordinate Zn(2+).

This sequence belongs to the class-II aminoacyl-tRNA synthetase family. It depends on Zn(2+) as a cofactor.

The protein resides in the cytoplasm. It carries out the reaction tRNA(Ala) + L-alanine + ATP = L-alanyl-tRNA(Ala) + AMP + diphosphate. In terms of biological role, catalyzes the attachment of alanine to tRNA(Ala) in a two-step reaction: alanine is first activated by ATP to form Ala-AMP and then transferred to the acceptor end of tRNA(Ala). Also edits incorrectly charged Ser-tRNA(Ala) and Gly-tRNA(Ala) via its editing domain. This is Alanine--tRNA ligase from Neisseria meningitidis serogroup C (strain 053442).